Here is a 105-residue protein sequence, read N- to C-terminus: Meiotically up-regulated gene 52 protein (105 aa).

Functionally, has a role in meiosis. The chain is Meiotically up-regulated gene 52 protein (mug52) from Schizosaccharomyces pombe (strain 972 / ATCC 24843) (Fission yeast).